Reading from the N-terminus, the 207-residue chain is Nucleoplasmin-2 (207 aa).

Positions 1–15 (MSRHSTSSVTETTAK) are enriched in polar residues. Disordered stretches follow at residues 1 to 20 (MSRH…MLWG) and 121 to 207 (DLTW…VTKK). The segment covering 123–147 (TWEDDEEEEEEEEEEDEDEDADISL) has biased composition (acidic residues). The tract at residues 129–152 (EEEEEEEEEDEDEDADISLEEIPV) is acidic tract A2. Residues 165-180 (SIAKKKKVEKEEDETV) carry the Bipartite nuclear localization signal motif. Basic residues predominate over residues 198-207 (PRAKKPVTKK).

The protein belongs to the nucleoplasmin family. As to quaternary structure, homopentamer, when bound to H2A-H2B dimers only. Homodecamer of two stacked pentamers, when bound to H2A-H2B dimers and H3-H4 tetramers simultaneously. In terms of tissue distribution, ovary specific.

It localises to the nucleus. Functionally, core histones chaperone involved in chromatin reprogramming, specially during fertilization and early embryonic development. Probably involved in sperm DNA decondensation during fertilization. The sequence is that of Nucleoplasmin-2 (Npm2) from Mus musculus (Mouse).